The sequence spans 116 residues: Aspartate 1-decarboxylase (116 aa).

S25 serves as the catalytic Schiff-base intermediate with substrate; via pyruvic acid. S25 carries the post-translational modification Pyruvic acid (Ser). T57 lines the substrate pocket. The active-site Proton donor is the Y58. Residue 73 to 75 (GAA) participates in substrate binding.

This sequence belongs to the PanD family. In terms of assembly, heterooctamer of four alpha and four beta subunits. It depends on pyruvate as a cofactor. Post-translationally, is synthesized initially as an inactive proenzyme, which is activated by self-cleavage at a specific serine bond to produce a beta-subunit with a hydroxyl group at its C-terminus and an alpha-subunit with a pyruvoyl group at its N-terminus.

It localises to the cytoplasm. The enzyme catalyses L-aspartate + H(+) = beta-alanine + CO2. It participates in cofactor biosynthesis; (R)-pantothenate biosynthesis; beta-alanine from L-aspartate: step 1/1. Functionally, catalyzes the pyruvoyl-dependent decarboxylation of aspartate to produce beta-alanine. This is Aspartate 1-decarboxylase from Fervidobacterium nodosum (strain ATCC 35602 / DSM 5306 / Rt17-B1).